The following is a 168-amino-acid chain: Photosystem I assembly protein Ycf3 (168 aa).

TPR repeat units follow at residues 35–68, 72–105, and 120–153; these read AFTY…EIDP, SYIL…NPFL, and GEQA…TPGN.

This sequence belongs to the Ycf3 family.

It localises to the plastid. The protein resides in the chloroplast thylakoid membrane. Its function is as follows. Essential for the assembly of the photosystem I (PSI) complex. May act as a chaperone-like factor to guide the assembly of the PSI subunits. In Gossypium barbadense (Sea Island cotton), this protein is Photosystem I assembly protein Ycf3.